A 203-amino-acid chain; its full sequence is ATP-dependent Clp protease proteolytic subunit (203 aa).

The active-site Nucleophile is Ser-107. His-132 is an active-site residue.

This sequence belongs to the peptidase S14 family. As to quaternary structure, fourteen ClpP subunits assemble into 2 heptameric rings which stack back to back to give a disk-like structure with a central cavity, resembling the structure of eukaryotic proteasomes.

The protein localises to the cytoplasm. The enzyme catalyses Hydrolysis of proteins to small peptides in the presence of ATP and magnesium. alpha-casein is the usual test substrate. In the absence of ATP, only oligopeptides shorter than five residues are hydrolyzed (such as succinyl-Leu-Tyr-|-NHMec, and Leu-Tyr-Leu-|-Tyr-Trp, in which cleavage of the -Tyr-|-Leu- and -Tyr-|-Trp bonds also occurs).. In terms of biological role, cleaves peptides in various proteins in a process that requires ATP hydrolysis. Has a chymotrypsin-like activity. Plays a major role in the degradation of misfolded proteins. This chain is ATP-dependent Clp protease proteolytic subunit, found in Shewanella pealeana (strain ATCC 700345 / ANG-SQ1).